Reading from the N-terminus, the 150-residue chain is uncharacterized protein (150 aa).

This is an uncharacterized protein from Acidianus filamentous virus 1 (isolate United States/Yellowstone) (AFV-1).